The chain runs to 919 residues: Calcium-activated chloride channel regulator 4 (919 aa).

The signal sequence occupies residues 1 to 21 (MGLFRGFVFLLVLCLLHQSNT). The segment at 45–199 (DEKIIEQIED…GISGRNRVYK (155 aa)) is metalloprotease domain. A glycan (N-linked (GlcNAc...) asparagine) is linked at Asn75. Residue His155 coordinates Zn(2+). The active site involves Glu156. The Zn(2+) site is built by His159 and Asp166. The VWFA domain occupies 306-476 (IVCLVLDKSG…NGLIDAFGAL (171 aa)). 9 N-linked (GlcNAc...) asparagine glycosylation sites follow: Asn340, Asn504, Asn542, Asn588, Asn628, Asn811, Asn832, Asn837, and Asn852. Positions 870–893 (ANPDDIDPTPTPTPTPTPDKSHNS) are disordered. Residues 895–915 (VNISTLVLSVIGSVVIVNFIL) traverse the membrane as a helical segment.

The protein belongs to the CLCR family. In terms of processing, the translation product is autoproteolytically cleaved by the metalloprotease domain in the endoplasmic reticulum into a N-terminal and a C-terminal products that remain physically associated with each other. The cleavage is necessary for calcium-activated chloride channel (CaCC) activation activity. In terms of tissue distribution, primarily expressed in the digestive tract, mainly in colon. Detected in smaller amounts in brain, urogenital organs, testis, and salivary and mammary glands. Highly expressed in the epithelial layer and submucosal gland of the inferior turbinate mucosa. Lower levels in the epithelial layer of nasal polyp.

Its subcellular location is the cell membrane. The protein localises to the apical cell membrane. The protein resides in the secreted. Functionally, may be involved in mediating calcium-activated chloride conductance. The chain is Calcium-activated chloride channel regulator 4 (CLCA4) from Homo sapiens (Human).